Consider the following 174-residue polypeptide: Early E1A protein (174 aa).

The interaction with RB1 in competition with E2F1 stretch occupies residues 40-48 (PSLHDLFDL). The LXCXE motif, interaction with host RB1 motif lies at 106–110 (LLCLE). A zinc finger lies at 145–163 (CLRCAYYQEQGENSICGLC).

It belongs to the adenoviridae E1A protein family. In terms of assembly, interacts with host UBE2I; this interaction interferes with polySUMOylation. Interacts with host RB1; this interaction induces the aberrant dissociation of RB1-E2F1 complex thereby disrupting the activity of RB1 and activating E2F1-regulated genes. Interacts with host ATF7; the interaction enhances ATF7-mediated viral transactivation activity which requires the zinc binding domains of both proteins. Isoform early E1A 32 kDa protein and isoform early E1A 26 kDa protein interact (via N-terminus) with CUL1 and E3 ubiquitin ligase RBX1; these interactions inhibit RBX1-CUL1-dependent elongation reaction of ubiquitin chains and attenuate ubiquitination of SCF(FBXW7) target proteins. Interacts (via PXLXP motif) with host ZMYND11/BS69 (via MYND-type zinc finger); this interaction inhibits E1A mediated transactivation. Interacts with host EP300; this interaction stimulates the acetylation of RB1 by recruiting EP300 and RB1 into a multimeric-protein complex. Interacts with host CTBP1 and CTBP2; this interaction seems to potentiate viral replication. Interacts with host DCAF7. Interacts with host DYRK1A. Interacts with host KPNA4; this interaction allows E1A import into the host nucleus. Interacts with host EP400; this interaction stabilizes MYC. Interacts with host TBP protein; this interaction probably disrupts the TBP-TATA complex.

The protein localises to the host nucleus. Functionally, plays a role in viral genome replication by driving entry of quiescent cells into the cell cycle. Stimulation of progression from G1 to S phase allows the virus to efficiently use the cellular DNA replicating machinery to achieve viral genome replication. E1A protein has both transforming and trans-activating activities. Induces the disassembly of the E2F1 transcription factor from RB1 by direct competition for the same binding site on RB1, with subsequent transcriptional activation of E2F1-regulated S-phase genes and of the E2 region of the adenoviral genome. Release of E2F1 leads to the ARF-mediated inhibition of MDM2 and causes TP53/p53 to accumulate because it is not targeted for degradation by MDM2-mediated ubiquitination anymore. This increase in TP53, in turn, would arrest the cell proliferation and direct its death but this effect is counteracted by the viral protein E1B-55K. Inactivation of the ability of RB1 to arrest the cell cycle is critical for cellular transformation, uncontrolled cellular growth and proliferation induced by viral infection. Interaction with RBX1 and CUL1 inhibits ubiquitination of the proteins targeted by SCF(FBXW7) ubiquitin ligase complex, and may be linked to unregulated host cell proliferation. The tumorigenesis-restraining activity of E1A may be related to the disruption of the host CtBP-CtIP complex through the CtBP binding motif. The chain is Early E1A protein from Canine adenovirus serotype 1 (strain RI261) (CAdV-1).